The sequence spans 199 residues: Elongation factor Ts (199 aa).

Residues 81 to 84 (TDFV) form an involved in Mg(2+) ion dislocation from EF-Tu region.

Belongs to the EF-Ts family.

It localises to the cytoplasm. In terms of biological role, associates with the EF-Tu.GDP complex and induces the exchange of GDP to GTP. It remains bound to the aminoacyl-tRNA.EF-Tu.GTP complex up to the GTP hydrolysis stage on the ribosome. This is Elongation factor Ts from Thermotoga petrophila (strain ATCC BAA-488 / DSM 13995 / JCM 10881 / RKU-1).